Here is a 235-residue protein sequence, read N- to C-terminus: Flavonoid 3',5'-methyltransferase (235 aa).

S-adenosyl-L-methionine contacts are provided by residues valine 51, glutamate 73, 75-76 (GV), serine 81, aspartate 99, and alanine 128. An a divalent metal cation-binding site is contributed by aspartate 151. Position 153 (aspartate 153) interacts with S-adenosyl-L-methionine. A divalent metal cation contacts are provided by aspartate 177 and asparagine 178.

It belongs to the class I-like SAM-binding methyltransferase superfamily. Cation-dependent O-methyltransferase family. CCoAMT subfamily. Requires a divalent metal cation as cofactor.

The protein localises to the cytoplasm. It carries out the reaction S-adenosyl-L-methionine + a 3'-hydroxyflavonoid = S-adenosyl-L-homocysteine + a 3'-methoxyflavonoid.. The catalysed reaction is S-adenosyl-L-methionine + a 5'-hydroxy-3'-methoxyflavonoid = S-adenosyl-L-homocysteine + a 3',5'-dimethoxyflavonoid.. It functions in the pathway pigment biosynthesis; anthocyanin biosynthesis. In terms of biological role, mediates O-methylation of anthocyanins. Anthocyanins are major pigments in grapes: at ripening initiation in red grapevine berries, the exocarp turns color from green to red and then to purple due to the accumulation and extent of methylation of anthocyanins. Catalyzes both 3' and 5' O-methylation of anthocyanins, with a preference for glycosylated substrates. Active on both anthocyanins and flavonols in vitro. Most active with delphinidin 3-glucoside but also acts on cyanidin 3-glucoside, cyanidin, myricetin, quercetin and quercetin 3-glucoside. Not able to methylate flavan type skeletons with chiral centers, such as catechins or dihydroquercetin. The chain is Flavonoid 3',5'-methyltransferase (FAOMT) from Vitis vinifera (Grape).